A 550-amino-acid polypeptide reads, in one-letter code: MAQLAGQPILILPEGTQRYVGRDAQRMNILAARIIAETVRTTLGPKGMDKMLVDSLGDIVITNDGATILDEMDIQHPAAKMMVEVAKTQDKEAGDGTTTAVVIAGELLKKAEELLDQNIHPSIVIKGYMLAAEKAQEILDSIAKEVKPDDEEVLLKAAMTAITGKAAEEEREYLAKLAVEAVKLVAEEKDGKFKVDIDNIKFEKKEGGAVSDTKLIRGVVIDKEVVHPGMPKRVEKAKIALINDALEVKETETDAEIRITSPEQLQAFLEQEEKMLKEMVDKIKEVGANVVFVQKGIDDLAQHYLAKYGILAVRRVKKSDMEKLAKATGAKIVTNIRDLTPEDLGEAELVEERKVAGENMIFVEGCKNPKAVTILIRGGTEHVVDEVERALEDAVKVVKDILEDGKIIAGGGAAEIELSIKLDEYAKEVGGKEQLAIEAFAEALKVIPRTLAENAGLDPIETLVKVIAAHKEKGPTIGIDVYEGEPADMMERGVIEPVRVKKQAIKSASEAAIMILRIDDVIAAQKLEKEKEGEKGGGGSEDFSSSSDLD.

A disordered region spans residues 529–550 (KEKEGEKGGGGSEDFSSSSDLD). Positions 541 to 550 (EDFSSSSDLD) are enriched in low complexity.

This sequence belongs to the TCP-1 chaperonin family. Forms an oligomeric complex of eight-membered rings.

Its function is as follows. Molecular chaperone; binds unfolded polypeptides in vitro, and has a weak ATPase activity. This Pyrococcus abyssi (strain GE5 / Orsay) protein is Thermosome subunit (ths).